The sequence spans 37 residues: Large ribosomal subunit protein bL36 (37 aa).

Belongs to the bacterial ribosomal protein bL36 family.

In Deinococcus geothermalis (strain DSM 11300 / CIP 105573 / AG-3a), this protein is Large ribosomal subunit protein bL36.